The chain runs to 296 residues: ATP synthase gamma chain (296 aa).

It belongs to the ATPase gamma chain family. F-type ATPases have 2 components, CF(1) - the catalytic core - and CF(0) - the membrane proton channel. CF(1) has five subunits: alpha(3), beta(3), gamma(1), delta(1), epsilon(1). CF(0) has three main subunits: a, b and c.

Its subcellular location is the cell inner membrane. Produces ATP from ADP in the presence of a proton gradient across the membrane. The gamma chain is believed to be important in regulating ATPase activity and the flow of protons through the CF(0) complex. This Gluconobacter oxydans (strain 621H) (Gluconobacter suboxydans) protein is ATP synthase gamma chain.